The primary structure comprises 190 residues: Potassium-transporting ATPase KdpC subunit (190 aa).

A helical transmembrane segment spans residues 13–33 (LLLILTLITGILYPIVTTGFA).

Belongs to the KdpC family. In terms of assembly, the system is composed of three essential subunits: KdpA, KdpB and KdpC.

It localises to the cell inner membrane. Its function is as follows. Part of the high-affinity ATP-driven potassium transport (or Kdp) system, which catalyzes the hydrolysis of ATP coupled with the electrogenic transport of potassium into the cytoplasm. This subunit acts as a catalytic chaperone that increases the ATP-binding affinity of the ATP-hydrolyzing subunit KdpB by the formation of a transient KdpB/KdpC/ATP ternary complex. The protein is Potassium-transporting ATPase KdpC subunit of Leptospira interrogans serogroup Icterohaemorrhagiae serovar copenhageni (strain Fiocruz L1-130).